Reading from the N-terminus, the 366-residue chain is Carbamoyl phosphate synthase small chain (366 aa).

The CPSase stretch occupies residues 1–171 (MLEKRYLVLE…KTPYVSTGSD (171 aa)). Positions 47, 221, and 223 each coordinate L-glutamine. The 188-residue stretch at 173–360 (SVVLLDFGKK…ITMMKDFKEK (188 aa)) folds into the Glutamine amidotransferase type-1 domain. The active-site Nucleophile is the Cys-248. 5 residues coordinate L-glutamine: Leu-249, Gln-252, Asn-290, Gly-292, and Tyr-293. Residues His-333 and Glu-335 contribute to the active site.

The protein belongs to the CarA family. As to quaternary structure, composed of two chains; the small (or glutamine) chain promotes the hydrolysis of glutamine to ammonia, which is used by the large (or ammonia) chain to synthesize carbamoyl phosphate. Tetramer of heterodimers (alpha,beta)4.

The catalysed reaction is hydrogencarbonate + L-glutamine + 2 ATP + H2O = carbamoyl phosphate + L-glutamate + 2 ADP + phosphate + 2 H(+). It catalyses the reaction L-glutamine + H2O = L-glutamate + NH4(+). It participates in amino-acid biosynthesis; L-arginine biosynthesis; carbamoyl phosphate from bicarbonate: step 1/1. Its pathway is pyrimidine metabolism; UMP biosynthesis via de novo pathway; (S)-dihydroorotate from bicarbonate: step 1/3. In terms of biological role, small subunit of the glutamine-dependent carbamoyl phosphate synthetase (CPSase). CPSase catalyzes the formation of carbamoyl phosphate from the ammonia moiety of glutamine, carbonate, and phosphate donated by ATP, constituting the first step of 2 biosynthetic pathways, one leading to arginine and/or urea and the other to pyrimidine nucleotides. The small subunit (glutamine amidotransferase) binds and cleaves glutamine to supply the large subunit with the substrate ammonia. In Staphylococcus epidermidis (strain ATCC 35984 / DSM 28319 / BCRC 17069 / CCUG 31568 / BM 3577 / RP62A), this protein is Carbamoyl phosphate synthase small chain.